The primary structure comprises 537 residues: Probable alpha-galactosidase A (537 aa).

The N-terminal stretch at 1–23 (MNQGTKSILLAATLAAIPWQVYG) is a signal peptide. An intrachain disulfide couples Cys-46 to Cys-78. Residues Asn-49, Asn-87, Asn-93, and Asn-123 are each glycosylated (N-linked (GlcNAc...) asparagine). Residues Cys-126 and Cys-156 are joined by a disulfide bond. The active-site Nucleophile is Asp-154. Asn-203 is a glycosylation site (N-linked (GlcNAc...) asparagine). Asp-212 functions as the Proton donor in the catalytic mechanism. 2 N-linked (GlcNAc...) asparagine glycosylation sites follow: Asn-355 and Asn-436. In terms of domain architecture, Ricin B-type lectin spans 413 to 537 (CSSVVPTGLV…FGLPSGVQLS (125 aa)). 2 cysteine pairs are disulfide-bonded: Cys-430/Cys-444 and Cys-469/Cys-482. Residue Asn-491 is glycosylated (N-linked (GlcNAc...) asparagine).

This sequence belongs to the glycosyl hydrolase 27 family.

It localises to the secreted. The enzyme catalyses Hydrolysis of terminal, non-reducing alpha-D-galactose residues in alpha-D-galactosides, including galactose oligosaccharides, galactomannans and galactolipids.. Its function is as follows. Hydrolyzes a variety of simple alpha-D-galactoside as well as more complex molecules such as oligosaccharides and polysaccharides. This Aspergillus niger (strain ATCC MYA-4892 / CBS 513.88 / FGSC A1513) protein is Probable alpha-galactosidase A (aglA).